We begin with the raw amino-acid sequence, 327 residues long: Protein UL95 homolog (327 aa).

It belongs to the herpesviridae UL95 family. In terms of assembly, interacts with ORF24; this interaction may serve as a core scaffold for the assembly of the viral transcription initiation complex. Interacts with ORF66. Interacts with ORF18. Interacts with ORF23. Interacts with ORF31. Interacts with host EPAS1; this interaction stabilizes host EPAS1, ensuring its transcriptional activity.

The protein resides in the host nucleus. Functionally, participates in the expression of late viral mRNAs in part by interacting with ORF24. Expressed before viral DNA replication, assembles at the viral pre-replication complexes (pre-RCs) and thus serves as a hub for recruiting a viral transcription complex to ORF24 to promote late viral gene expression. Also plays a regulatory role in the viral life cycle by regulating host transcriptional regulators HIF1A and EPAS1. This chain is Protein UL95 homolog (ORF34), found in Homo sapiens (Human).